We begin with the raw amino-acid sequence, 67 residues long: MDNRLLEILVCPLCKGKLEYDRAAQELICHADKLAYPIRDGIPVMLADEARQSVPGRVIDPAAPRTE.

Belongs to the UPF0434 family.

This chain is UPF0434 protein Reut_A0592, found in Cupriavidus pinatubonensis (strain JMP 134 / LMG 1197) (Cupriavidus necator (strain JMP 134)).